Reading from the N-terminus, the 462-residue chain is MKEPDAIKLFIGQIPRNLDEKDLKPIFEQFGKIYELTVIKDKFTGMHKGCAFLTYCARESALKAQSALHEQKTLPGMNRPIQVKPADSESRGEDRKLFVGMLGKQQTDEDVRRMFETFGNIDECTVLRGPDGTSKGCAFVKFQTHTEAQAAINALHGSRTLPGASSSLVVKFADTEKERGLRRMQQVANQLGMFSPIALQFGAYSAYTQAVSDQLMQQQAALVAAQSAYLNPMATMAAVQMQQMATINPNGIIATPITQINSITSSSGTSTPPTLTATPVSAIPATLGVNGYSAVPTQSTVQPSSEAIYTNGLHPYPAQSPVAQLDPLQQAYAGMQHYTAAYPAAYGLVSPAFTQPPAILTQQPPQQQQQREGPEGCNIFIYHLPQEFTDSEILQMFLPFGNVISAKVFVDRATNQSKCFGFVSFDNPGSAQAAIQSMNGFQIGMKRLKVQLKRPKDANRPY.

3 consecutive RRM domains span residues 7 to 88 (IKLF…PADS), 95 to 175 (RKLF…FADT), and 377 to 455 (CNIF…LKRP).

Belongs to the CELF/BRUNOL family.

Its subcellular location is the nucleus. The protein resides in the cytoplasm. Its function is as follows. RNA-binding protein that may be involved in the regulation of pre-mRNA alternative splicing. The sequence is that of CUGBP Elav-like family member 3-B (tnrc4-b) from Xenopus laevis (African clawed frog).